The following is a 407-amino-acid chain: Methylthioribose kinase (407 aa).

ATP is bound by residues Asn-40, Lys-57, and 111–113 (EDL). Residue Asp-229 coordinates substrate. Position 246 to 248 (246 to 248 (DAE)) interacts with ATP. Arg-344 is a substrate binding site.

This sequence belongs to the methylthioribose kinase family. Homodimer.

The enzyme catalyses 5-(methylsulfanyl)-D-ribose + ATP = 5-(methylsulfanyl)-alpha-D-ribose 1-phosphate + ADP + H(+). The protein operates within amino-acid biosynthesis; L-methionine biosynthesis via salvage pathway; S-methyl-5-thio-alpha-D-ribose 1-phosphate from S-methyl-5'-thioadenosine (hydrolase route): step 2/2. Catalyzes the phosphorylation of methylthioribose into methylthioribose-1-phosphate. In Yersinia pseudotuberculosis serotype O:3 (strain YPIII), this protein is Methylthioribose kinase.